Reading from the N-terminus, the 807-residue chain is Ecotropic viral integration site 5 ortholog (807 aa).

A disordered region spans residues 1 to 31 (MTLTTTTTASSAESQAKMDVKGGALPGEENL). Thr-33 carries the post-translational modification Phosphothreonine. Phosphoserine is present on residues Ser-58 and Ser-64. In terms of domain architecture, Rab-GAP TBC spans 116 to 300 (GIPHHFRAIV…RIMDVFLSEG (185 aa)). 3 coiled-coil regions span residues 352–463 (SIKL…ENNV), 494–583 (CLLE…ENQR), and 627–772 (REME…RGKF).

In terms of assembly, interacts with Rab11.

Its subcellular location is the cytoplasm. The protein resides in the endosome. Functionally, functions as a GTPase-activating protein (GAP). During border cell migration in the ovary, acts as a GAP for Rab11 and is necessary for the maintenance of active receptor tyrosine kinases at the leading edge. The chain is Ecotropic viral integration site 5 ortholog (Evi5) from Drosophila melanogaster (Fruit fly).